An 8903-amino-acid polypeptide reads, in one-letter code: Nonribosomal peptide synthetase vlms (8903 aa).

The Carrier 1 domain maps to 11–84 (GSCRTTLGKV…ELADSIDEQN (74 aa)). The interval 13 to 81 (CRTTLGKVAA…TLAELADSID (69 aa)) is thiolation (T) domain 1. An O-(pantetheine 4'-phosphoryl)serine modification is found at Ser-45. Adenylation (A) domain regions lie at residues 59 to 736 (GIWV…SHLP) and 989 to 1386 (MAAQ…IKIR). The segment at 572-953 (VPHQLDTEKL…FLLDGVNMSI (382 aa)) is condensation (C) domain 1. The region spanning 1524–1600 (SSMSTVEQEL…QLALAAESQA (77 aa)) is the Carrier 2 domain. Residues 1529–1597 (VEQELRQIWS…TIPQLALAAE (69 aa)) are thiolation (T) domain 2. Ser-1561 is modified (O-(pantetheine 4'-phosphoryl)serine). The segment at 1613 to 2050 (FPLSPIQKMY…TVKELAAVSA (438 aa)) is epimerase (E) domain 1. Residues 2091–2523 (DILPCSPIQQ…LLSVSEENKL (433 aa)) are condensation (C) domain 2. The tract at residues 2546–2943 (MSSHADATAI…GRQDSQVKIR (398 aa)) is adenylation (A) domain 2. The region spanning 3084–3160 (LFTTAIERQL…ELALQAKMVD (77 aa)) is the Carrier 3 domain. The thiolation (T) domain 3 stretch occupies residues 3089–3157 (IERQLRQVWS…TIPELALQAK (69 aa)). The residue at position 3121 (Ser-3121) is an O-(pantetheine 4'-phosphoryl)serine. The interval 3174–3614 (FALSPIQQMY…AIKSLVEELM (441 aa)) is epimerase (E) domain 2. Residues 3655 to 4093 (EDILPCSPMQ…LMSTKDIQQL (439 aa)) form a condensation (C) domain 3 region. Residues 4114–4512 (ERLNTQPESM…GRIDTQIKIR (399 aa)) are adenylation (A) domain 3. A Carrier 4 domain is found at 4649 to 4725 (APRTTMEKKL…DLAEATELKC (77 aa)). The segment at 4654–4722 (MEKKLRDLFA…ILADLAEATE (69 aa)) is thiolation (T) domain 4. Ser-4686 is subject to O-(pantetheine 4'-phosphoryl)serine. Residues 4775–5191 (EDVYPCSPLQ…AQLQMLSEED (417 aa)) are condensation (C) domain 4. The adenylation (A) domain 4 stretch occupies residues 5216–5614 (ETMTSQPDAP…GRRDTQVKIR (399 aa)). Residues 5753 to 5829 (APTTAMEKRL…DLAQELEQRH (77 aa)) enclose the Carrier 5 domain. The tract at residues 5758–5826 (MEKRLQNLFC…RLGDLAQELE (69 aa)) is thiolation (T) domain 5. Ser-5790 is subject to O-(pantetheine 4'-phosphoryl)serine. Residue Glu-5875 is a region of interest, condensation (C) domain 5. Residues 6311–6702 (EEQMSLRPSE…GRMDGQIKIR (392 aa)) are adenylation (A) domain 5. The Carrier 6 domain occupies 6836–6912 (SSATNTERQL…ELAATLEVMD (77 aa)). The interval 6841-6909 (TERQLRQIWS…TIPELAATLE (69 aa)) is thiolation (T) domain 6. Position 6873 is an O-(pantetheine 4'-phosphoryl)serine (Ser-6873). Positions 6923–7349 (GFFELSPIQR…YGRTIKTLVE (427 aa)) are epimerase (E) domain 3. A condensation (C) domain 6 region spans residues 7391–7823 (EDILPCSPIQ…LVLTNDEAQI (433 aa)). Residues 7844 to 8240 (EQMARKPEAQ…LDRIGTQVKI (397 aa)) form an adenylation (A) domain 6 region. The 77-residue stretch at 8368–8444 (APISATEAVF…AMAACVSDVS (77 aa)) folds into the Carrier 7 domain. The tract at residues 8369–8441 (PISATEAVFC…VLHAMAACVS (73 aa)) is thiolation (T) domain 7. Residue Ser-8405 is modified to O-(pantetheine 4'-phosphoryl)serine. The interval 8482 to 8897 (DVLPTTEFQT…MENPRSTVGH (416 aa)) is condensation (C) domain 7.

The protein belongs to the NRP synthetase family.

Its pathway is secondary metabolite biosynthesis. Functionally, nonribosomal peptide synthetase; part of the gene cluster that mediates the biosynthesis of verlamelin, a lipopeptide that exhibits antifungal activity against plant pathogenic fungi. Verlamelin is a cyclic hexadepsipeptide and is bridged by ester bonding between a 5-hydroxytetradecanoic acid moiety and a carboxyl group on the terminal Val of amide-bonded tetradecanoyl-hexapeptide D-allo-Thr-D-Ala-L-Pro-L-Gln-D-Tyr-L-Val. VlmA and vlmB are altogether regarded as essential components in the biosynthesis of 5-hydroxytetradecanoic acid. VlmA catalyzes the hydroxylation at position C5 of tetradecanoic acid produced in primary metabolism, while the precise function of vlmB still remains to be solved. To be loaded onto the waiting NRPS, 5-hydroxytetradecanoic acid is activated in the form of acyladenylate by the AMP-dependent ligase vlmC. VlmS seems to accept the fatty-acyl intermediate onto the initial module to further elongate amino acid residues by the downstream modules. In addition, in the last module at its C-terminus, vlmS contains a surplus condensation (C) domain that may be involved in cyclization, the last step to form verlamelin. The protein is Nonribosomal peptide synthetase vlms of Lecanicillium sp.